The chain runs to 207 residues: Outer-membrane lipoprotein LolB (207 aa).

The N-terminal stretch at methionine 1–alanine 23 is a signal peptide. Cysteine 24 carries N-palmitoyl cysteine lipidation. Cysteine 24 carries S-diacylglycerol cysteine lipidation. The disordered stretch occupies residues proline 171–proline 207.

It belongs to the LolB family. As to quaternary structure, monomer.

The protein resides in the cell outer membrane. Its function is as follows. Plays a critical role in the incorporation of lipoproteins in the outer membrane after they are released by the LolA protein. The sequence is that of Outer-membrane lipoprotein LolB from Cupriavidus pinatubonensis (strain JMP 134 / LMG 1197) (Cupriavidus necator (strain JMP 134)).